The chain runs to 361 residues: Ribosomal RNA large subunit methyltransferase M (361 aa).

S-adenosyl-L-methionine contacts are provided by residues serine 187, cysteine 220–glycine 223, aspartate 239, aspartate 259, and aspartate 276. Lysine 305 serves as the catalytic Proton acceptor.

This sequence belongs to the class I-like SAM-binding methyltransferase superfamily. RNA methyltransferase RlmE family. RlmM subfamily. As to quaternary structure, monomer.

The protein localises to the cytoplasm. The enzyme catalyses cytidine(2498) in 23S rRNA + S-adenosyl-L-methionine = 2'-O-methylcytidine(2498) in 23S rRNA + S-adenosyl-L-homocysteine + H(+). Functionally, catalyzes the 2'-O-methylation at nucleotide C2498 in 23S rRNA. The sequence is that of Ribosomal RNA large subunit methyltransferase M from Shewanella sp. (strain MR-7).